A 494-amino-acid polypeptide reads, in one-letter code: ATP synthase subunit beta, chloroplastic (494 aa).

An ATP-binding site is contributed by 172–179 (GGAGVGKT).

The protein belongs to the ATPase alpha/beta chains family. As to quaternary structure, F-type ATPases have 2 components, CF(1) - the catalytic core - and CF(0) - the membrane proton channel. CF(1) has five subunits: alpha(3), beta(3), gamma(1), delta(1), epsilon(1). CF(0) has four main subunits: a(1), b(1), b'(1) and c(9-12).

It is found in the plastid. It localises to the chloroplast thylakoid membrane. It carries out the reaction ATP + H2O + 4 H(+)(in) = ADP + phosphate + 5 H(+)(out). In terms of biological role, produces ATP from ADP in the presence of a proton gradient across the membrane. The catalytic sites are hosted primarily by the beta subunits. This chain is ATP synthase subunit beta, chloroplastic, found in Physcomitrium patens (Spreading-leaved earth moss).